The chain runs to 56 residues: Large ribosomal subunit protein bL32 (56 aa).

A disordered region spans residues 1-56; that stretch reads MAVQQNRKTRSKRGMRRSHDALSAPTLSQDKETGTTHRRHHVAPDGFYRGRKVVDV. Positions 7–16 are enriched in basic residues; sequence RKTRSKRGMR.

It belongs to the bacterial ribosomal protein bL32 family.

In Chromohalobacter salexigens (strain ATCC BAA-138 / DSM 3043 / CIP 106854 / NCIMB 13768 / 1H11), this protein is Large ribosomal subunit protein bL32.